The sequence spans 184 residues: Probable RNA 2'-phosphotransferase (184 aa).

This sequence belongs to the KptA/TPT1 family.

Its function is as follows. Removes the 2'-phosphate from RNA via an intermediate in which the phosphate is ADP-ribosylated by NAD followed by a presumed transesterification to release the RNA and generate ADP-ribose 1''-2''-cyclic phosphate (APPR&gt;P). May function as an ADP-ribosylase. In Rhodopirellula baltica (strain DSM 10527 / NCIMB 13988 / SH1), this protein is Probable RNA 2'-phosphotransferase.